The following is a 125-amino-acid chain: Protein ApaG (125 aa).

The ApaG domain occupies 1–125 (MINAPRVCVQ…FRLAIPSLIH (125 aa)).

This Pectobacterium atrosepticum (strain SCRI 1043 / ATCC BAA-672) (Erwinia carotovora subsp. atroseptica) protein is Protein ApaG.